Consider the following 255-residue polypeptide: Small ribosomal subunit protein uS2 (255 aa).

The protein belongs to the universal ribosomal protein uS2 family.

In Streptococcus pyogenes serotype M49 (strain NZ131), this protein is Small ribosomal subunit protein uS2.